We begin with the raw amino-acid sequence, 684 residues long: Beta-mannosyltransferase 1 (684 aa).

Residues Met1 to Lys28 lie on the Cytoplasmic side of the membrane. A helical membrane pass occupies residues Leu29–Ser49. Over Asn50–Phe684 the chain is Extracellular. Residue Asn297 is glycosylated (N-linked (GlcNAc...) asparagine).

Belongs to the BMT family.

It is found in the membrane. Beta-mannosyltransferase involved in cell wall biosynthesis. Required for addition of the first beta-mannose residue to acid-stable fraction of cell wall phosphopeptidomannan. Plays a key role in reducing host inflammatory response. This Candida albicans (strain SC5314 / ATCC MYA-2876) (Yeast) protein is Beta-mannosyltransferase 1 (BMT1).